Here is a 230-residue protein sequence, read N- to C-terminus: Ion-translocating oxidoreductase complex subunit E (230 aa).

A run of 5 helical transmembrane segments spans residues 22 to 42 (LLGLCPLLAVTSTATNALGLG), 63 to 83 (TPAEIRIPIYVMIIASVVSAV), 86 to 106 (LINAYAFGLYQSLGIFIPLIV), 125 to 145 (WLSALDGFSIGMGATGAMFVL), and 182 to 202 (PFLLAMLPPGAFIGLGLMLAV).

Belongs to the NqrDE/RnfAE family. As to quaternary structure, the complex is composed of six subunits: RsxA, RsxB, RsxC, RsxD, RsxE and RsxG.

Its subcellular location is the cell inner membrane. Its function is as follows. Part of a membrane-bound complex that couples electron transfer with translocation of ions across the membrane. Required to maintain the reduced state of SoxR. The polypeptide is Ion-translocating oxidoreductase complex subunit E (Salmonella paratyphi A (strain ATCC 9150 / SARB42)).